A 270-amino-acid polypeptide reads, in one-letter code: Phosphodiesterase YaeI (270 aa).

Residues aspartate 56, histidine 58, aspartate 88, asparagine 120, histidine 209, and histidine 211 each contribute to the a divalent metal cation site.

Belongs to the metallophosphoesterase superfamily. The cofactor is a divalent metal cation.

In terms of biological role, shows phosphodiesterase activity, hydrolyzing phosphodiester bond in the artificial chromogenic substrate bis-p-nitrophenyl phosphate (bis-pNPP). This Escherichia coli (strain K12) protein is Phosphodiesterase YaeI (yaeI).